Consider the following 444-residue polypeptide: Chitinase-like protein Idgf1 (444 aa).

An N-terminal signal peptide occupies residues 1–20 (MTSLLFVILNIILTLHLCAG). Positions 29-444 (KRLICYYDAQ…PILRSVRGHL (416 aa)) constitute a GH18 domain. The cysteines at positions 33 and 60 are disulfide-linked. Residues N213, N225, and N335 are each glycosylated (N-linked (GlcNAc...) asparagine). C346 and C429 are joined by a disulfide.

This sequence belongs to the glycosyl hydrolase 18 family. IDGF subfamily. Post-translationally, glycosylated.

The protein resides in the secreted. In terms of biological role, cooperates with insulin-like peptides to stimulate the proliferation, polarization and motility of imaginal disk cells. May act by stabilizing the binding of insulin-like peptides to its receptor through a simultaneous interaction with both molecules to form a multiprotein signaling complex. The protein is Chitinase-like protein Idgf1 (Idgf1) of Glossina morsitans morsitans (Savannah tsetse fly).